The sequence spans 578 residues: Rhoptry protein 4 (578 aa).

The signal sequence occupies residues 1-33 (MGHPTSFGQPSCLVWLAAAFLVLGLCLVQQGAG). The disordered stretch occupies residues 56–82 (VDKYSRDSTEGENTVSEGEAEGSRGGS). The 288-residue stretch at 259–546 (LVRGRRIGLF…ALQAIETPEY (288 aa)) folds into the Protein kinase domain. Positions 559–578 (LYSGDGTLTGGDDDMPPLET) are disordered. The span at 569-578 (GDDDMPPLET) shows a compositional bias: acidic residues.

Post-translationally, phosphorylated on multiple serine and threonine residues in parasitic extracts and infected cells but not in extracellular parasites.

The protein localises to the secreted. The protein resides in the parasitophorous vacuole membrane. Functionally, thought to play a role in parasitophorous vacuole membrane function during the infection of host organisms. The polypeptide is Rhoptry protein 4 (Toxoplasma gondii).